A 365-amino-acid chain; its full sequence is MAEKETPLTAVKVEALVVMKIIKHCSQTFPTTATGSIVGMDVGGTLEITNSFPFPVLEVPSESHFENAPTNPAAAAPRAKGNAAYQAEMIRMLREVNVDANNVGWYTSANMGNFVNMNVVENQFFYQKEMNERTVALVHDVSRSSQGSLSLRAFRLSPKFMTAFKENKFTSEELQKSNLRYQDIFVELPVEIHNSHLITSFIHQLQTPNIPTPTELPPSLAALESGPFVNSTILAPNYDNLTLSIDPFLEKNCDLLLDSMETHHTETNNFQYYQRSLAREQQRISAWQQKRKQENATRATLKQPLLPEDEWQRLFKLPQEPSRLDSMLNSRQVDQYARQVDSFVSATTGKMFAVKGNLLPGETTK.

The region spanning 11–160 (VKVEALVVMK…LRAFRLSPKF (150 aa)) is the MPN domain.

It belongs to the eIF-3 subunit H family. Component of the eukaryotic translation initiation factor 3 (eIF-3) complex.

The protein localises to the cytoplasm. Functionally, component of the eukaryotic translation initiation factor 3 (eIF-3) complex, which is involved in protein synthesis of a specialized repertoire of mRNAs and, together with other initiation factors, stimulates binding of mRNA and methionyl-tRNAi to the 40S ribosome. The eIF-3 complex specifically targets and initiates translation of a subset of mRNAs involved in cell proliferation. The sequence is that of Eukaryotic translation initiation factor 3 subunit H from Aspergillus clavatus (strain ATCC 1007 / CBS 513.65 / DSM 816 / NCTC 3887 / NRRL 1 / QM 1276 / 107).